The chain runs to 72 residues: Small ribosomal subunit protein bS18 (72 aa).

It belongs to the bacterial ribosomal protein bS18 family. As to quaternary structure, part of the 30S ribosomal subunit. Forms a tight heterodimer with protein bS6.

Functionally, binds as a heterodimer with protein bS6 to the central domain of the 16S rRNA, where it helps stabilize the platform of the 30S subunit. The protein is Small ribosomal subunit protein bS18 of Francisella tularensis subsp. holarctica (strain FTNF002-00 / FTA).